A 426-amino-acid polypeptide reads, in one-letter code: Putative acid phosphatase 1 (426 aa).

An N-terminal signal peptide occupies residues 1 to 18; that stretch reads MRVLFYVSILVIIASVHT. The Extracellular portion of the chain corresponds to 19–388; the sequence is QLISVHVIFR…SEWVMTPLSW (370 aa). Histidine 29 serves as the catalytic Nucleophile. N-linked (GlcNAc...) asparagine glycosylation is found at asparagine 37 and asparagine 145. An intrachain disulfide couples cysteine 133 to cysteine 369. The active-site Proton donor is the aspartate 276. The chain crosses the membrane as a helical span at residues 389 to 409; it reads IIVAIAILLLIALILMTYFVI. Residues 410–426 lie on the Cytoplasmic side of the membrane; sequence RYKNRSIVNIKKLSLEN.

Belongs to the histidine acid phosphatase family.

Its subcellular location is the membrane. The enzyme catalyses a phosphate monoester + H2O = an alcohol + phosphate. The sequence is that of Putative acid phosphatase 1 from Caenorhabditis elegans.